The sequence spans 203 residues: Protein S40-6 (203 aa).

Residues 1 to 33 (MAKGRKPTTMNRSDRYLGSYTYGDSHGNSVTDE) are disordered.

It belongs to the senescence regulator S40 family.

It is found in the cytoplasm. This chain is Protein S40-6, found in Arabidopsis thaliana (Mouse-ear cress).